We begin with the raw amino-acid sequence, 282 residues long: Transcription factor LBX1 (282 aa).

Residues 1–20 (MTSKEDGKAAPGEERRRSPL) show a composition bias toward basic and acidic residues. The disordered stretch occupies residues 1 to 36 (MTSKEDGKAAPGEERRRSPLDHLPPPANSNKPLTPF). The segment at residues 125-184 (RRKSRTAFTNHQIYELEKRFLYQKYLSPADRDQIAQQLGLTNAQVITWFQNRRAKLKRDL) is a DNA-binding region (homeobox). The disordered stretch occupies residues 210-282 (ELEQNSEASG…EEDEEIDVDD (73 aa)). Residues 218–227 (SGGGGGGGCG) show a composition bias toward gly residues. A compositionally biased stretch (acidic residues) spans 269 to 282 (CSEDEEDEEIDVDD).

Interacts with SKOR1 which acts as a transcriptional corepressor. In terms of tissue distribution, expressed in the dorsal part of the spinal cord and hindbrain and in presumptive myogenic cells in lateral regions of differentiating somites.

It localises to the nucleus. Its function is as follows. Transcription factor required for the development of GABAergic interneurons in the dorsal horn of the spinal cord and migration and further development of hypaxial muscle precursor cells for limb muscles, diaphragm and hypoglossal cord. This is Transcription factor LBX1 (Lbx1) from Mus musculus (Mouse).